The primary structure comprises 138 residues: Secreted RxLR effector protein 51 (138 aa).

A signal peptide spans 1 to 19 (MRSSTILFVLGVAMVAVNG). The short motif at 38 to 53 (RLLRSNSGKHKTDEER) is the RxLR-dEER element. N101 is a glycosylation site (N-linked (GlcNAc...) asparagine).

This sequence belongs to the RxLR effector family.

The protein localises to the secreted. It localises to the host nucleus. Functionally, secreted effector that completely suppresses the host cell death induced by cell death-inducing proteins. The protein is Secreted RxLR effector protein 51 of Plasmopara viticola (Downy mildew of grapevine).